A 57-amino-acid chain; its full sequence is Large ribosomal subunit protein bL32 (57 aa).

Belongs to the bacterial ribosomal protein bL32 family.

The protein is Large ribosomal subunit protein bL32 of Halothermothrix orenii (strain H 168 / OCM 544 / DSM 9562).